The chain runs to 222 residues: MKLSLSQPCSFSGALLLLAVSNLLVWEKVTSLPNYRLPTESLYQRVIVVSHNAHDLASKAFMEFEMKFGRTAWTYGLMLSPCHTAAILTPENSEQVHQTTSEDLLKVSITILQAWEEPLKHMVAAVAALPHVPDTLLSRTKELEERIQGLLEGLKIIFNRVYPGAVASDYTFWSAWSDLQSSDESTKNSALRTLWRCVRRDTHKVDNYLKVLKCRDVHNNNC.

Positions methionine 1–serine 31 are cleaved as a signal peptide. 2 disulfide bridges follow: cysteine 82–cysteine 197 and cysteine 214–cysteine 222.

This sequence belongs to the somatotropin/prolactin family.

The protein localises to the secreted. The polypeptide is Prolactin-3B1 (Prl3b1) (Mus musculus (Mouse)).